The sequence spans 452 residues: Ribosomal protein uS12 methylthiotransferase RimO (452 aa).

One can recognise an MTTase N-terminal domain in the interval 8–123; the sequence is PRVGFVSLGC…VMQAVHTHLP (116 aa). C17, C53, C82, C154, C158, and C161 together coordinate [4Fe-4S] cluster. One can recognise a Radical SAM core domain in the interval 140 to 381; the sequence is LTPKHYAYLK…MEVAEEVSAR (242 aa). In terms of domain architecture, TRAM spans 384-452; it reads QRKVGQTLRV…ADGHDLWGEI (69 aa).

It belongs to the methylthiotransferase family. RimO subfamily. [4Fe-4S] cluster serves as cofactor.

It localises to the cytoplasm. The catalysed reaction is L-aspartate(89)-[ribosomal protein uS12]-hydrogen + (sulfur carrier)-SH + AH2 + 2 S-adenosyl-L-methionine = 3-methylsulfanyl-L-aspartate(89)-[ribosomal protein uS12]-hydrogen + (sulfur carrier)-H + 5'-deoxyadenosine + L-methionine + A + S-adenosyl-L-homocysteine + 2 H(+). In terms of biological role, catalyzes the methylthiolation of an aspartic acid residue of ribosomal protein uS12. In Cupriavidus pinatubonensis (strain JMP 134 / LMG 1197) (Cupriavidus necator (strain JMP 134)), this protein is Ribosomal protein uS12 methylthiotransferase RimO.